Reading from the N-terminus, the 451-residue chain is Probable M18 family aminopeptidase 1 (451 aa).

Residues histidine 93, histidine 168, and histidine 426 each contribute to the Zn(2+) site.

The protein belongs to the peptidase M18 family. It depends on Zn(2+) as a cofactor.

The chain is Probable M18 family aminopeptidase 1 (apeA) from Thermotoga maritima (strain ATCC 43589 / DSM 3109 / JCM 10099 / NBRC 100826 / MSB8).